Here is a 209-residue protein sequence, read N- to C-terminus: MLLAKISVVVLLLAIDGTSSSESTDNVVLSSSPDSQKAATSRHKRAPGWGKRSSLNDEDLFADSDSAQELLDSVAALKRAPGWGKRFSGLMSEGSSLEAKRAPGWGKRGQEIDVDEDGSEQEKRAPGWGKRAPGWGKRAPGWGKRAPGWGKRAPGWGKRAPGWGKRSGGDYCETLEKMVDAYIYKAVEVDSRRLADCGSGEGTNEPFRK.

An N-terminal signal peptide occupies residues Met1–Ser20. Positions Ser21 to Ala39 are enriched in polar residues. The propeptide at Ser21 to His43 is connecting peptide 1. The segment at Ser21–Asn56 is disordered. At Trp49 the chain carries Tryptophan amide. The propeptide at Ser53 to Leu77 is connecting peptide 2. A tryptophan amide mark is found at Trp83 and Trp105. The disordered stretch occupies residues Glu98–Gly169. The propeptide at Gly109–Glu122 is connecting peptide 4. Trp128, Trp135, Trp142, Trp149, Trp156, and Trp163 each carry tryptophan amide. The propeptide at Ser167–Ser191 is connecting peptide 5. Cys172 and Cys197 are joined by a disulfide.

Homodimer; disulfide-linked. In terms of tissue distribution, cerebral peptide 1 is expressed in the cerebral, pedal and buccal ganglia and B1 and B2 neurons. APGW-amide is expressed in buccal ganglia and several neurons.

Its subcellular location is the secreted. Its function is as follows. May function as a peptide transmitter. The chain is Cerebral peptide 1 from Aplysia californica (California sea hare).